A 179-amino-acid polypeptide reads, in one-letter code: SCAN domain-containing protein 1 (179 aa).

The segment at 1–108 is disordered; it reads MAATEPILAA…GSRLGPETFR (108 aa). The span at 60 to 80 shows a compositional bias: low complexity; that stretch reads AIPTPQAAASAAPELPLGPAP. The SCAN box domain maps to 108–166; sequence RQRFRQFRYQDAAGPREAFRQLRELSRQWLRPDIRTKEQIVEMLVQEQLLAILPEAARA.

Interacts with ZNF202.

It is found in the nucleus. Its function is as follows. May regulate transcriptional activity. The sequence is that of SCAN domain-containing protein 1 (SCAND1) from Pongo pygmaeus (Bornean orangutan).